A 116-amino-acid polypeptide reads, in one-letter code: Ribonuclease P protein component (116 aa).

Belongs to the RnpA family. In terms of assembly, consists of a catalytic RNA component (M1 or rnpB) and a protein subunit.

The enzyme catalyses Endonucleolytic cleavage of RNA, removing 5'-extranucleotides from tRNA precursor.. Its function is as follows. RNaseP catalyzes the removal of the 5'-leader sequence from pre-tRNA to produce the mature 5'-terminus. It can also cleave other RNA substrates such as 4.5S RNA. The protein component plays an auxiliary but essential role in vivo by binding to the 5'-leader sequence and broadening the substrate specificity of the ribozyme. The polypeptide is Ribonuclease P protein component (Citrifermentans bemidjiense (strain ATCC BAA-1014 / DSM 16622 / JCM 12645 / Bem) (Geobacter bemidjiensis)).